The primary structure comprises 99 residues: Nucleoid-associated protein EbfC (99 aa).

It belongs to the YbaB/EbfC family. Homodimer.

It is found in the cytoplasm. It localises to the nucleoid. Binds to DNA and alters its conformation. May be involved in regulation of gene expression, nucleoid organization and DNA protection. This chain is Nucleoid-associated protein EbfC, found in Borreliella afzelii (strain PKo) (Borrelia afzelii).